The following is a 414-amino-acid chain: Cyclin-B1-3 (414 aa).

This sequence belongs to the cyclin family. Cyclin AB subfamily. Expressed in roots, stems and flowers.

In Arabidopsis thaliana (Mouse-ear cress), this protein is Cyclin-B1-3 (CYCB1-3).